The sequence spans 367 residues: Probable butyrate kinase (367 aa).

It belongs to the acetokinase family.

The protein localises to the cytoplasm. It carries out the reaction butanoate + ATP = butanoyl phosphate + ADP. In Bacillus cereus (strain ZK / E33L), this protein is Probable butyrate kinase.